The following is a 99-amino-acid chain: uncharacterized protein (99 aa).

3 consecutive transmembrane segments (helical) span residues phenylalanine 7–tyrosine 29, phenylalanine 39–asparagine 61, and phenylalanine 68–leucine 90.

It is found in the cell membrane. This is an uncharacterized protein from Archaeoglobus fulgidus (strain ATCC 49558 / DSM 4304 / JCM 9628 / NBRC 100126 / VC-16).